The sequence spans 153 residues: ORM1-like protein 1 (153 aa).

The Cytoplasmic segment spans residues 1 to 26 (MNVGVAHSEVNPNTRVMNSRGMWLTY). Transmembrane regions (helical) follow at residues 27-46 (ALGVGLLHIVLLSIPFFSVP) and 47-64 (VAWTLTNVIHNLGMYVFL). The Cytoplasmic portion of the chain corresponds to 65-100 (HAVKGTPFETPDQGKARLLTHWEQLDYGVQFTSSRK). Residues 101-121 (FFTISPIILYFLASFYTKYDT) form a helical membrane-spanning segment. Over 122–123 (TH) the chain is Extracellular. Residues 124-140 (FILNTASLLSVLIPKMP) traverse the membrane as a helical segment. The Cytoplasmic portion of the chain corresponds to 141–153 (QLHGVRIFGINKY).

Belongs to the ORM family. In terms of assembly, ceramide-sensitive subunit of the serine palmitoyltransferase (SPT) complex, which is also composed of SPTLC1, SPTLC2/3 and SPTSSA/B.

It is found in the endoplasmic reticulum membrane. Plays an essential role in the homeostatic regulation of sphingolipid de novo biosynthesis by modulating the activity of the serine palmitoyltransferase (SPT) in response to ceramide levels. When complexed to SPT, the binding of ceramides to its N-terminus stabilizes a conformation that block SPT substrate entry, hence preventing SPT catalytic activity. Through this mechanism, maintains ceramide levels at sufficient concentrations for the production of complex sphingolipids, but which prevents the accumulation of ceramides to levels that trigger apoptosis. This Bos taurus (Bovine) protein is ORM1-like protein 1 (ORMDL1).